Reading from the N-terminus, the 488-residue chain is Transmembrane protein 39A (488 aa).

Residues Asn-31 and Asn-39 are each glycosylated (N-linked (GlcNAc...) asparagine). The next 3 membrane-spanning stretches (helical) occupy residues Gly-72–Ile-92, Thr-110–Ala-130, and Leu-155–Val-175. Asn-180 carries N-linked (GlcNAc...) asparagine glycosylation. Helical transmembrane passes span Ser-182 to Phe-202, Glu-287 to Val-307, Cys-319 to Pro-339, Leu-420 to Leu-440, and Asn-446 to Leu-466.

Belongs to the TMEM39 family.

Its subcellular location is the endoplasmic reticulum membrane. Its function is as follows. Regulates autophagy by controlling the spatial distribution and levels of the intracellular phosphatidylinositol 4-phosphate (PtdIns(4)P) pools. Modulates (PtdIns(4)P) levels by regulating the ER-to-Golgi trafficking of the phosphatidylinositide phosphatase SACM1L. The polypeptide is Transmembrane protein 39A (tmem39a) (Xenopus tropicalis (Western clawed frog)).